A 1238-amino-acid chain; its full sequence is ATP-dependent helicase/nuclease subunit A (1238 aa).

The 469-residue stretch at 6–474 (TKWTETQKSA…IKLSENFRSR (469 aa)) folds into the UvrD-like helicase ATP-binding domain. Residue 27 to 34 (AGAGTGKT) coordinates ATP. In terms of domain architecture, UvrD-like helicase C-terminal spans 512-811 (PFEGNCGGDV…RIMSIHKSKG (300 aa)).

Belongs to the helicase family. AddA subfamily. As to quaternary structure, heterodimer of AddA and AddB/RexB. It depends on Mg(2+) as a cofactor.

The catalysed reaction is Couples ATP hydrolysis with the unwinding of duplex DNA by translocating in the 3'-5' direction.. The enzyme catalyses ATP + H2O = ADP + phosphate + H(+). Functionally, the heterodimer acts as both an ATP-dependent DNA helicase and an ATP-dependent, dual-direction single-stranded exonuclease. Recognizes the chi site generating a DNA molecule suitable for the initiation of homologous recombination. The AddA nuclease domain is required for chi fragment generation; this subunit has the helicase and 3' -&gt; 5' nuclease activities. This chain is ATP-dependent helicase/nuclease subunit A, found in Clostridium kluyveri (strain NBRC 12016).